The sequence spans 430 residues: Formate-dependent phosphoribosylglycinamide formyltransferase (430 aa).

N(1)-(5-phospho-beta-D-ribosyl)glycinamide contacts are provided by residues 26 to 27 (EL) and Glu86. ATP contacts are provided by residues Arg118, Lys159, 199–202 (EEHI), and Glu207. Residues 123–319 (ETLVKEAKVP…EFALHLRAVL (197 aa)) enclose the ATP-grasp domain. Positions 276 and 288 each coordinate Mg(2+). Residues Asp295, Lys375, and 382–383 (RR) contribute to the N(1)-(5-phospho-beta-D-ribosyl)glycinamide site.

This sequence belongs to the PurK/PurT family. In terms of assembly, homodimer.

The catalysed reaction is N(1)-(5-phospho-beta-D-ribosyl)glycinamide + formate + ATP = N(2)-formyl-N(1)-(5-phospho-beta-D-ribosyl)glycinamide + ADP + phosphate + H(+). It participates in purine metabolism; IMP biosynthesis via de novo pathway; N(2)-formyl-N(1)-(5-phospho-D-ribosyl)glycinamide from N(1)-(5-phospho-D-ribosyl)glycinamide (formate route): step 1/1. In terms of biological role, involved in the de novo purine biosynthesis. Catalyzes the transfer of formate to 5-phospho-ribosyl-glycinamide (GAR), producing 5-phospho-ribosyl-N-formylglycinamide (FGAR). Formate is provided by PurU via hydrolysis of 10-formyl-tetrahydrofolate. The protein is Formate-dependent phosphoribosylglycinamide formyltransferase of Pyrococcus horikoshii (strain ATCC 700860 / DSM 12428 / JCM 9974 / NBRC 100139 / OT-3).